The following is a 449-amino-acid chain: Monoacylglycerol lipase (449 aa).

Lysine 82 participates in a covalent cross-link: Glycyl lysine isopeptide (Lys-Gly) (interchain with G-Cter in ubiquitin). Residues 151-392 (PMLIILHGLT…LLLETSTGGH (242 aa)) form the AB hydrolase-1 domain. The GXSXG motif lies at 230–234 (GFSLG). Serine 232 acts as the Nucleophile in catalysis. Catalysis depends on charge relay system residues aspartate 364 and histidine 392.

Belongs to the AB hydrolase superfamily. AB hydrolase 4 family.

The catalysed reaction is Hydrolyzes glycerol monoesters of long-chain fatty acids.. It catalyses the reaction 1-hexadecanoylglycerol + H2O = glycerol + hexadecanoate + H(+). The enzyme catalyses 1-octadecanoylglycerol + H2O = octadecanoate + glycerol + H(+). It carries out the reaction 1-(9Z-octadecenoyl)-glycerol + H2O = glycerol + (9Z)-octadecenoate + H(+). Functionally, converts monoacylglycerides (MAG) to free fatty acids and glycerol. Has a preference for palmitoyl-MAG. Does not play a significant role in ethyl ester biosynthesis. Also possesses ester hydrolase and low but persistent TAG lipase activity. The protein is Monoacylglycerol lipase of Saccharomyces cerevisiae (strain ATCC 204508 / S288c) (Baker's yeast).